The sequence spans 382 residues: Chaperone protein DnaJ (382 aa).

Positions 5–70 constitute a J domain; the sequence is DYYEVLGLKK…QKRAAYDQYG (66 aa). The CR-type zinc-finger motif lies at 134-212; it reads GTTKDIQINT…CHGEGRVHKK (79 aa). 8 residues coordinate Zn(2+): cysteine 147, cysteine 150, cysteine 164, cysteine 167, cysteine 186, cysteine 189, cysteine 200, and cysteine 203. 4 CXXCXGXG motif repeats span residues 147-154, 164-171, 186-193, and 200-207; these read CDSCGGSG, CPHCHGSG, CPSCHGSG, and CRSCHGEG.

It belongs to the DnaJ family. In terms of assembly, homodimer. It depends on Zn(2+) as a cofactor.

It is found in the cytoplasm. Participates actively in the response to hyperosmotic and heat shock by preventing the aggregation of stress-denatured proteins and by disaggregating proteins, also in an autonomous, DnaK-independent fashion. Unfolded proteins bind initially to DnaJ; upon interaction with the DnaJ-bound protein, DnaK hydrolyzes its bound ATP, resulting in the formation of a stable complex. GrpE releases ADP from DnaK; ATP binding to DnaK triggers the release of the substrate protein, thus completing the reaction cycle. Several rounds of ATP-dependent interactions between DnaJ, DnaK and GrpE are required for fully efficient folding. Also involved, together with DnaK and GrpE, in the DNA replication of plasmids through activation of initiation proteins. In Haemophilus influenzae (strain PittGG), this protein is Chaperone protein DnaJ.